Here is a 307-residue protein sequence, read N- to C-terminus: Elongation factor Ts (307 aa).

Positions 80-83 (TDFV) are involved in Mg(2+) ion dislocation from EF-Tu.

This sequence belongs to the EF-Ts family.

The protein localises to the cytoplasm. In terms of biological role, associates with the EF-Tu.GDP complex and induces the exchange of GDP to GTP. It remains bound to the aminoacyl-tRNA.EF-Tu.GTP complex up to the GTP hydrolysis stage on the ribosome. In Methylobacterium sp. (strain 4-46), this protein is Elongation factor Ts.